A 260-amino-acid chain; its full sequence is Ribosomal RNA small subunit methyltransferase J (260 aa).

S-adenosyl-L-methionine is bound by residues 125–126 (ER) and aspartate 179.

This sequence belongs to the methyltransferase superfamily. RsmJ family.

Its subcellular location is the cytoplasm. The catalysed reaction is guanosine(1516) in 16S rRNA + S-adenosyl-L-methionine = N(2)-methylguanosine(1516) in 16S rRNA + S-adenosyl-L-homocysteine + H(+). In terms of biological role, specifically methylates the guanosine in position 1516 of 16S rRNA. The protein is Ribosomal RNA small subunit methyltransferase J of Pseudomonas fluorescens (strain ATCC BAA-477 / NRRL B-23932 / Pf-5).